Consider the following 286-residue polypeptide: Dioxygenase trt7 (286 aa).

Residues H129, D131, and H206 each coordinate Fe cation.

The protein belongs to the PhyH family. As to quaternary structure, homodimer. Fe cation is required as a cofactor.

The protein operates within secondary metabolite biosynthesis; terpenoid biosynthesis. Dioxygenase; part of the gene cluster that mediates the biosynthesis of terretonin, a fungal meroterpenoid that acts as a mycotoxin. The first step of the pathway is the synthesis of 3,5-dimethylorsellinic acid (DMOA) by the polyketide synthase trt4. DMOA is then prenylated into farnesyl-DMOA by the polyprenyl transferase trt2. Methylation by the methyltransferase trt5 then leads to farnesyl-DMOA methyl ester which is further subject to epoxidation by the FAD-dependent monooxygenase trt8 to yield epoxyfarnesyl-DMOA methyl ester. Cyclization of epoxyfarnesyl-DMOA methyl ester by the terpene cyclase trt1 leads to a tetracycle intermediate which is in turn converted to preterretonin. Dehydrogenase trt9 comes next to transform preterretonin to preterrenoid. The FAD-dependent monooxygenase trt3 is then required for the C-hydroxylation at C16 of preterrenoid to yield terrenoid. The cytochrome P450 trt6 catalyzes three successive oxidations to transform terrenoid into an unstable intermediate, which then undergoes the D-ring expansion and unusual rearrangement of the methoxy group to afford the core skeleton of terretonin. Trt14 catalyzes the D-ring expansion of terretonin involving intramolecular methoxy rearrangement as well as the hydrolysis of the expanded D-ring and the methyl ester moiety. Finally, the nonheme iron-dependent dioxygenase trt7 accomplishes the last two oxidation reactions steps to complete the biosynthesis of terretonin. Terretonin C is produced via spontaneous decarboxylation of the terretonin precursor. Another shunt product of the terretonin biosynthesis is dihydrofarnesyl-DMOA, derived from epoxyfarnesyl-DMOA through hydrolysis of the epoxide. This Aspergillus terreus (strain NIH 2624 / FGSC A1156) protein is Dioxygenase trt7.